The chain runs to 364 residues: Guanine nucleotide-binding protein alpha-6 subunit (364 aa).

The disordered stretch occupies residues 1 to 29 (MGAGATGLRGARLSPEERANSSKSRAIDR). Gly-2 is lipidated: N-myristoyl glycine. A compositionally biased stretch (basic and acidic residues) spans 14 to 29 (SPEERANSSKSRAIDR). The G-alpha domain maps to 40 to 363 (NRFKILLLGT…NENLRSAGLH (324 aa)). The segment at 43–56 (KILLLGTAESGKST) is G1 motif. Residues 48–55 (GTAESGKS), 186–192 (VHCRIST), 211–215 (DVGGQ), 280–283 (NKYD), and Ala-335 contribute to the GTP site. Residues Ser-55 and Thr-192 each coordinate Mg(2+). Residues 184–192 (DIVHCRIST) are G2 motif. Residues 207 to 216 (FKMVDVGGQR) form a G3 motif region. The G4 motif stretch occupies residues 276-283 (VLFLNKYD). The G5 motif stretch occupies residues 333–338 (TTATDT).

This sequence belongs to the G-alpha family. In terms of assembly, g proteins are composed of 3 units; alpha, beta and gamma. The alpha chain contains the guanine nucleotide binding site.

Guanine nucleotide-binding proteins (G proteins) are involved as modulators or transducers in various transmembrane signaling systems. The polypeptide is Guanine nucleotide-binding protein alpha-6 subunit (gpa-6) (Caenorhabditis elegans).